The following is a 202-amino-acid chain: Putative 3-methyladenine DNA glycosylase (202 aa).

It belongs to the DNA glycosylase MPG family.

This chain is Putative 3-methyladenine DNA glycosylase, found in Staphylococcus aureus (strain Mu3 / ATCC 700698).